Consider the following 498-residue polypeptide: UDP-N-acetylmuramate--L-alanine ligase (498 aa).

An ATP-binding site is contributed by 120–126 (GSHGKTT).

This sequence belongs to the MurCDEF family.

It is found in the cytoplasm. The catalysed reaction is UDP-N-acetyl-alpha-D-muramate + L-alanine + ATP = UDP-N-acetyl-alpha-D-muramoyl-L-alanine + ADP + phosphate + H(+). It participates in cell wall biogenesis; peptidoglycan biosynthesis. In terms of biological role, cell wall formation. The protein is UDP-N-acetylmuramate--L-alanine ligase of Rickettsia typhi (strain ATCC VR-144 / Wilmington).